A 159-amino-acid polypeptide reads, in one-letter code: Bacterioferritin (159 aa).

Residues 1–145 (MQGDPDVLRL…TQLELMDKLG (145 aa)) form the Ferritin-like diiron domain. Residues glutamate 18 and glutamate 51 each coordinate Fe cation. Position 52 (methionine 52) interacts with heme b. Fe cation-binding residues include histidine 54, glutamate 94, glutamate 127, and histidine 130.

The protein belongs to the bacterioferritin family. Homooligomer of 24 subunits, arranged as 12 dimers, that are packed together to form an approximately spherical molecule with a central cavity, in which large amounts of iron can be deposited. Heme b is required as a cofactor.

It catalyses the reaction 4 Fe(2+) + O2 + 4 H(+) = 4 Fe(3+) + 2 H2O. The catalysed reaction is Fe(2+)(in) = Fe(2+)(out). Functionally, iron-storage protein, whose ferroxidase center binds Fe(2+), oxidizes it using dioxygen to Fe(3+), and participates in the subsequent Fe(3+) oxide mineral core formation within the central cavity of the BFR protein shell. The polypeptide is Bacterioferritin (bfr) (Mycobacterium bovis (strain ATCC BAA-935 / AF2122/97)).